Reading from the N-terminus, the 319-residue chain is MNEILFFSPQPLFSHMMNENSRVHTHSNLRHIFFSEIGIGISGNSFLLLFHILKFIHGHRSRLSDLPIGLLSLIHLLMLLVMAFIATDIFISWRGWDDIICKFLVYLYRVLRGLSLCTTSMLSVLQAIILSPRSSCLAKFKRKSLHHISCAILFLSVLYMLIGSQLLVSIIATPNLTTNDFIYVTQSCSILPLSYVMQSMFSTLLVIRDVFLISLMVLSTWYMVALLCRHRKKTQHLQGISLSPKTSPKQRATQTLLMLMSFFVLMTIYDTIVSCSRTMFLNDPTSYNMQIFVVHIYATVSPFVFMSTEKHIVNCLRSV.

Topologically, residues 1-31 (MNEILFFSPQPLFSHMMNENSRVHTHSNLRH) are extracellular. A helical transmembrane segment spans residues 32–52 (IFFSEIGIGISGNSFLLLFHI). Residues 53–65 (LKFIHGHRSRLSD) are Cytoplasmic-facing. Residues 66–86 (LPIGLLSLIHLLMLLVMAFIA) form a helical membrane-spanning segment. At 87 to 109 (TDIFISWRGWDDIICKFLVYLYR) the chain is on the extracellular side. A disulfide bridge connects residues cysteine 101 and cysteine 188. The chain crosses the membrane as a helical span at residues 110–130 (VLRGLSLCTTSMLSVLQAIIL). The Cytoplasmic portion of the chain corresponds to 131–150 (SPRSSCLAKFKRKSLHHISC). A helical membrane pass occupies residues 151–171 (AILFLSVLYMLIGSQLLVSII). Over 172–203 (ATPNLTTNDFIYVTQSCSILPLSYVMQSMFST) the chain is Extracellular. N-linked (GlcNAc...) asparagine glycosylation occurs at asparagine 175. Residues 204-224 (LLVIRDVFLISLMVLSTWYMV) traverse the membrane as a helical segment. Topologically, residues 225 to 254 (ALLCRHRKKTQHLQGISLSPKTSPKQRATQ) are cytoplasmic. A helical transmembrane segment spans residues 255–275 (TLLMLMSFFVLMTIYDTIVSC). Topologically, residues 276–285 (SRTMFLNDPT) are extracellular. Residues 286–306 (SYNMQIFVVHIYATVSPFVFM) form a helical membrane-spanning segment. The Cytoplasmic portion of the chain corresponds to 307-319 (STEKHIVNCLRSV).

Belongs to the G-protein coupled receptor 1 family. As to expression, expressed in a subset of sensory neurons located in the apical layer of the vomeronasal organ.

It is found in the cell membrane. Its function is as follows. Putative pheromone receptor implicated in the regulation of social as well as reproductive behavior. This chain is Vomeronasal type-1 receptor 51 (Vmn1r51), found in Mus musculus (Mouse).